Consider the following 357-residue polypeptide: UDP-N-acetylglucosamine--N-acetylmuramyl-(pentapeptide) pyrophosphoryl-undecaprenol N-acetylglucosamine transferase (357 aa).

UDP-N-acetyl-alpha-D-glucosamine-binding residues include arginine 166, serine 196, and glutamine 290.

It belongs to the glycosyltransferase 28 family. MurG subfamily.

Its subcellular location is the cell membrane. The enzyme catalyses Mur2Ac(oyl-L-Ala-gamma-D-Glu-L-Lys-D-Ala-D-Ala)-di-trans,octa-cis-undecaprenyl diphosphate + UDP-N-acetyl-alpha-D-glucosamine = beta-D-GlcNAc-(1-&gt;4)-Mur2Ac(oyl-L-Ala-gamma-D-Glu-L-Lys-D-Ala-D-Ala)-di-trans,octa-cis-undecaprenyl diphosphate + UDP + H(+). It participates in cell wall biogenesis; peptidoglycan biosynthesis. Functionally, cell wall formation. Catalyzes the transfer of a GlcNAc subunit on undecaprenyl-pyrophosphoryl-MurNAc-pentapeptide (lipid intermediate I) to form undecaprenyl-pyrophosphoryl-MurNAc-(pentapeptide)GlcNAc (lipid intermediate II). The chain is UDP-N-acetylglucosamine--N-acetylmuramyl-(pentapeptide) pyrophosphoryl-undecaprenol N-acetylglucosamine transferase from Staphylococcus epidermidis (strain ATCC 35984 / DSM 28319 / BCRC 17069 / CCUG 31568 / BM 3577 / RP62A).